The primary structure comprises 340 residues: Toxin coregulated pilus biosynthesis protein E (340 aa).

3 helical membrane passes run 108–131 (AISSMITPSVMLIVTMVVIAGYSV), 146–161 (WPGVTQALYNLGFSLY), and 312–333 (NISLITLALSVIWIFGAIFSLV).

Belongs to the GSP F family.

Its subcellular location is the cell inner membrane. Its function is as follows. Probably involved in cholera toxin receptor (GM1) interaction in order to bring the cells within close proximity of the ganglioside for efficient toxin delivery. This chain is Toxin coregulated pilus biosynthesis protein E (tcpE), found in Vibrio cholerae serotype O1 (strain ATCC 39315 / El Tor Inaba N16961).